The primary structure comprises 160 residues: Putative antiporter subunit mnhE2 (160 aa).

3 consecutive transmembrane segments (helical) span residues 22–42 (SFQFSTFVSGFIIGLIVIYIL), 61–81 (FLGVYLYQLITSSISIINYIL), and 102–122 (WAITFLTILIIITPGSTVIRI).

It belongs to the CPA3 antiporters (TC 2.A.63) subunit E family. As to quaternary structure, may form a heterooligomeric complex that consists of seven subunits: mnhA2, mnhB2, mnhC2, mnhD2, mnhE2, mnhF2 and mnhG2.

Its subcellular location is the cell membrane. The sequence is that of Putative antiporter subunit mnhE2 (mnhE2) from Staphylococcus haemolyticus (strain JCSC1435).